A 134-amino-acid chain; its full sequence is Small ribosomal subunit protein uS9 (134 aa).

The segment at 109-134 is disordered; the sequence is DARRTEPHKPSKSSKGPRARRQKSYR. A compositionally biased stretch (basic residues) spans 118 to 134; the sequence is PSKSSKGPRARRQKSYR.

It belongs to the universal ribosomal protein uS9 family.

The chain is Small ribosomal subunit protein uS9 from Methanococcus vannielii (strain ATCC 35089 / DSM 1224 / JCM 13029 / OCM 148 / SB).